We begin with the raw amino-acid sequence, 523 residues long: Putative oxidoreductase TDA3 (523 aa).

A compositionally biased stretch (low complexity) spans 157-172 (NSSLSSSGSSLKNDSA). Residues 157–189 (NSSLSSSGSSLKNDSASNEEEGSDIHVSSSVPS) form a disordered region. Residues Ser189, Ser204, and Ser306 each carry the phosphoserine modification.

The protein belongs to the TDA3 family. In terms of assembly, interacts with BTN2.

The protein resides in the cytoplasm. It localises to the late endosome. Its function is as follows. Putative oxidoreductase that negatively regulates the retrieval of cargo from late endosomes to the Golgi. Regulates YIF1 and KEX2 localization. Required for fast DNA replication. The sequence is that of Putative oxidoreductase TDA3 (TDA3) from Saccharomyces cerevisiae (strain ATCC 204508 / S288c) (Baker's yeast).